We begin with the raw amino-acid sequence, 1180 residues long: Pyruvate carboxylase 2 (1180 aa).

Residue Ser-2 is modified to N-acetylserine. Residues 19–471 (EKNKILVANR…WTTFIDDTPQ (453 aa)) form the Biotin carboxylation domain. ATP is bound by residues Lys-137, Glu-221, and His-256. One can recognise an ATP-grasp domain in the interval 141-338 (RHLAARANVP…IVSAQIQIAA (198 aa)). Residue Arg-313 is part of the active site. The Pyruvate carboxyltransferase domain occupies 558-825 (TLLMDTTWRD…DTGINVEHVR (268 aa)). Substrate contacts are provided by residues 566 to 570 (RDAHQ) and Arg-639. Asp-567 provides a ligand contact to a divalent metal cation. 3 residues coordinate a divalent metal cation: Lys-735, His-765, and His-767. Position 735 is an N6-carboxylysine (Lys-735). Thr-899 provides a ligand contact to substrate. Positions 1095-1170 (KADVHDTHQI…DASDLLVVLE (76 aa)) constitute a Biotinyl-binding domain. Lys-1136 is subject to N6-biotinyllysine.

Homotetramer. It depends on biotin as a cofactor. Requires Zn(2+) as cofactor.

It is found in the cytoplasm. The enzyme catalyses hydrogencarbonate + pyruvate + ATP = oxaloacetate + ADP + phosphate + H(+). The protein operates within carbohydrate biosynthesis; gluconeogenesis. In terms of biological role, pyruvate carboxylase catalyzes a 2-step reaction, involving the ATP-dependent carboxylation of the covalently attached biotin in the first step and the transfer of the carboxyl group to pyruvate in the second. The polypeptide is Pyruvate carboxylase 2 (PYC2) (Saccharomyces cerevisiae (strain ATCC 204508 / S288c) (Baker's yeast)).